The primary structure comprises 372 residues: N-methyl-L-tryptophan oxidase (372 aa).

4-34 provides a ligand contact to FAD; sequence DLIIIGSGSVGAAAGYYATRAGLKVLMTDAH. Cys307 bears the S-8alpha-FAD cysteine mark.

Belongs to the MSOX/MTOX family. MTOX subfamily. Monomer. The cofactor is FAD.

The catalysed reaction is N(alpha)-methyl-L-tryptophan + O2 + H2O = L-tryptophan + formaldehyde + H2O2. In terms of biological role, catalyzes the oxidative demethylation of N-methyl-L-tryptophan. The chain is N-methyl-L-tryptophan oxidase from Salmonella typhi.